The following is a 105-amino-acid chain: T cell receptor alpha variable 40 (105 aa).

The N-terminal stretch at 1–19 is a signal peptide; it reads MNSSLDFLILILMFGGTSS. The Ig-like domain occupies 20-105; the sequence is NSVKQTGQIT…DSAVYYCLLG (86 aa). An N-linked (GlcNAc...) asparagine glycan is attached at N39. A disulfide bond links C40 and C102.

In terms of assembly, alpha-beta TR is a heterodimer composed of an alpha and beta chain; disulfide-linked. The alpha-beta TR is associated with the transmembrane signaling CD3 coreceptor proteins to form the TR-CD3 (TcR or TCR). The assembly of alpha-beta TR heterodimers with CD3 occurs in the endoplasmic reticulum where a single alpha-beta TR heterodimer associates with one CD3D-CD3E heterodimer, one CD3G-CD3E heterodimer and one CD247 homodimer forming a stable octameric structure. CD3D-CD3E and CD3G-CD3E heterodimers preferentially associate with TR alpha and TR beta chains, respectively. The association of the CD247 homodimer is the last step of TcR assembly in the endoplasmic reticulum and is required for transport to the cell surface.

The protein localises to the cell membrane. Functionally, v region of the variable domain of T cell receptor (TR) alpha chain that participates in the antigen recognition. Alpha-beta T cell receptors are antigen specific receptors which are essential to the immune response and are present on the cell surface of T lymphocytes. Recognize peptide-major histocompatibility (MH) (pMH) complexes that are displayed by antigen presenting cells (APC), a prerequisite for efficient T cell adaptive immunity against pathogens. Binding of alpha-beta TR to pMH complex initiates TR-CD3 clustering on the cell surface and intracellular activation of LCK that phosphorylates the ITAM motifs of CD3G, CD3D, CD3E and CD247 enabling the recruitment of ZAP70. In turn ZAP70 phosphorylates LAT, which recruits numerous signaling molecules to form the LAT signalosome. The LAT signalosome propagates signal branching to three major signaling pathways, the calcium, the mitogen-activated protein kinase (MAPK) kinase and the nuclear factor NF-kappa-B (NF-kB) pathways, leading to the mobilization of transcription factors that are critical for gene expression and essential for T cell growth and differentiation. The T cell repertoire is generated in the thymus, by V-(D)-J rearrangement. This repertoire is then shaped by intrathymic selection events to generate a peripheral T cell pool of self-MH restricted, non-autoaggressive T cells. Post-thymic interaction of alpha-beta TR with the pMH complexes shapes TR structural and functional avidity. This chain is T cell receptor alpha variable 40, found in Homo sapiens (Human).